A 756-amino-acid polypeptide reads, in one-letter code: Catalase-peroxidase (756 aa).

The tryptophyl-tyrosyl-methioninium (Trp-Tyr) (with M-270) cross-link spans 91–244 (WHSAGTYRTG…LAAVQMGLIY (154 aa)). Histidine 92 (proton acceptor) is an active-site residue. Residues 198 to 230 (AQKKMQQPGDGTLVAEPENHANEESRTASGERN) form a disordered region. The segment covering 214–223 (PENHANEESR) has biased composition (basic and acidic residues). The segment at residues 244–270 (YVNPEGPEGVPDPVASARDIRETFGRM) is a cross-link (tryptophyl-tyrosyl-methioninium (Tyr-Met) (with W-91)). Residue histidine 285 participates in heme b binding. The interval 371–390 (KNGAGAGKIPDAHDPSKRHA) is disordered.

The protein belongs to the peroxidase family. Peroxidase/catalase subfamily. Homodimer or homotetramer. Heme b is required as a cofactor. Formation of the three residue Trp-Tyr-Met cross-link is important for the catalase, but not the peroxidase activity of the enzyme.

It catalyses the reaction H2O2 + AH2 = A + 2 H2O. It carries out the reaction 2 H2O2 = O2 + 2 H2O. Its function is as follows. Bifunctional enzyme with both catalase and broad-spectrum peroxidase activity. This is Catalase-peroxidase from Pseudomonas syringae pv. tomato (strain ATCC BAA-871 / DC3000).